The following is a 381-amino-acid chain: Anhydro-N-acetylmuramic acid kinase (381 aa).

22-29 lines the ATP pocket; the sequence is GTSIDGID.

It belongs to the anhydro-N-acetylmuramic acid kinase family.

It catalyses the reaction 1,6-anhydro-N-acetyl-beta-muramate + ATP + H2O = N-acetyl-D-muramate 6-phosphate + ADP + H(+). It functions in the pathway amino-sugar metabolism; 1,6-anhydro-N-acetylmuramate degradation. Its pathway is cell wall biogenesis; peptidoglycan recycling. In terms of biological role, catalyzes the specific phosphorylation of 1,6-anhydro-N-acetylmuramic acid (anhMurNAc) with the simultaneous cleavage of the 1,6-anhydro ring, generating MurNAc-6-P. Is required for the utilization of anhMurNAc either imported from the medium or derived from its own cell wall murein, and thus plays a role in cell wall recycling. This is Anhydro-N-acetylmuramic acid kinase from Xylella fastidiosa (strain Temecula1 / ATCC 700964).